The chain runs to 309 residues: MEPENDTGISEFVLLGLSEEPELQPFLFGLFLSMYLVTVLGNLLIILATISDSHLHTPMYFFLSNLSFADICFISTTIPKMLINIQTQSRVITYAGCITQMCFFVLFGGLDSLLLAVMAYDRFVAICHPLHYTVIMNPRLCGLLVLASWMIAALNSLSQSLMVLWLSFCTDLEIPHFFCELNQVIHLACSDTFLNDMGMYFAAGLLAGGPLVGILCSYSKIVSSIRAISSAQGKYKAFSTCASHLSVVSLFCCTGLGVYLTSAATHNSHTSATASVMYTVATPMLNPFIYSLRNKDIKRALKMSFRGKQ.

The Extracellular segment spans residues 1–25 (MEPENDTGISEFVLLGLSEEPELQP). An N-linked (GlcNAc...) asparagine glycan is attached at N5. The helical transmembrane segment at 26-46 (FLFGLFLSMYLVTVLGNLLII) threads the bilayer. Residues 47–54 (LATISDSH) lie on the Cytoplasmic side of the membrane. The chain crosses the membrane as a helical span at residues 55-75 (LHTPMYFFLSNLSFADICFIS). The Extracellular segment spans residues 76–99 (TTIPKMLINIQTQSRVITYAGCIT). C97 and C189 are oxidised to a cystine. The helical transmembrane segment at 100–120 (QMCFFVLFGGLDSLLLAVMAY) threads the bilayer. The Cytoplasmic portion of the chain corresponds to 121–139 (DRFVAICHPLHYTVIMNPR). A helical transmembrane segment spans residues 140–160 (LCGLLVLASWMIAALNSLSQS). Residues 161–197 (LMVLWLSFCTDLEIPHFFCELNQVIHLACSDTFLNDM) lie on the Extracellular side of the membrane. Residues 198-217 (GMYFAAGLLAGGPLVGILCS) form a helical membrane-spanning segment. Over 218-237 (YSKIVSSIRAISSAQGKYKA) the chain is Cytoplasmic. The chain crosses the membrane as a helical span at residues 238–258 (FSTCASHLSVVSLFCCTGLGV). Residues 259 to 271 (YLTSAATHNSHTS) are Extracellular-facing. A helical membrane pass occupies residues 272 to 292 (ATASVMYTVATPMLNPFIYSL). The Cytoplasmic segment spans residues 293-309 (RNKDIKRALKMSFRGKQ).

The protein belongs to the G-protein coupled receptor 1 family.

Its subcellular location is the cell membrane. In terms of biological role, odorant receptor. The polypeptide is Olfactory receptor 7A17 (OR7A17) (Homo sapiens (Human)).